Reading from the N-terminus, the 800-residue chain is Phenylalanine--tRNA ligase beta subunit (800 aa).

One can recognise a tRNA-binding domain in the interval Ala-39–Phe-152. One can recognise a B5 domain in the interval Thr-405–Thr-480. Mg(2+) contacts are provided by Asp-458, Asp-464, Glu-467, and Glu-468. The 94-residue stretch at Thr-707–Arg-800 folds into the FDX-ACB domain.

It belongs to the phenylalanyl-tRNA synthetase beta subunit family. Type 1 subfamily. As to quaternary structure, tetramer of two alpha and two beta subunits. The cofactor is Mg(2+).

It localises to the cytoplasm. It catalyses the reaction tRNA(Phe) + L-phenylalanine + ATP = L-phenylalanyl-tRNA(Phe) + AMP + diphosphate + H(+). The polypeptide is Phenylalanine--tRNA ligase beta subunit (Streptococcus pneumoniae (strain ATCC BAA-255 / R6)).